A 975-amino-acid polypeptide reads, in one-letter code: Glycine dehydrogenase (decarboxylating) (975 aa).

Position 723 is an N6-(pyridoxal phosphate)lysine (Lys723).

The protein belongs to the GcvP family. In terms of assembly, the glycine cleavage system is composed of four proteins: P, T, L and H. Requires pyridoxal 5'-phosphate as cofactor.

It catalyses the reaction N(6)-[(R)-lipoyl]-L-lysyl-[glycine-cleavage complex H protein] + glycine + H(+) = N(6)-[(R)-S(8)-aminomethyldihydrolipoyl]-L-lysyl-[glycine-cleavage complex H protein] + CO2. Its function is as follows. The glycine cleavage system catalyzes the degradation of glycine. The P protein binds the alpha-amino group of glycine through its pyridoxal phosphate cofactor; CO(2) is released and the remaining methylamine moiety is then transferred to the lipoamide cofactor of the H protein. This Burkholderia ambifaria (strain ATCC BAA-244 / DSM 16087 / CCUG 44356 / LMG 19182 / AMMD) (Burkholderia cepacia (strain AMMD)) protein is Glycine dehydrogenase (decarboxylating).